We begin with the raw amino-acid sequence, 493 residues long: Probable plastidic glucose transporter 2 (493 aa).

A compositionally biased stretch (polar residues) spans 1 to 14 (MLGLQRETSSMYKR). The segment at 1–24 (MLGLQRETSSMYKRTSSRDYSPMI) is disordered. The next 12 membrane-spanning stretches (helical) occupy residues 52–72 (LPHV…LGVV), 94–114 (LVVS…GGVA), 128–148 (LPMI…VMLL), 151–171 (FLVG…VTEV), 182–202 (SFIQ…GIPV), 211–231 (VCFW…FLCA), 293–313 (VVFI…NAVF), 329–349 (LGNI…MVLM), 356–376 (LLLL…VGAT), 392–412 (GTLV…GLLL), 424–444 (AMAF…LLFL), and 450–470 (LGPR…VMFV).

This sequence belongs to the major facilitator superfamily. Sugar transporter (TC 2.A.1.1) family.

It localises to the plastid. It is found in the chloroplast membrane. Its function is as follows. May be involved in the efflux of glucose towards the cytosol. This chain is Probable plastidic glucose transporter 2, found in Arabidopsis thaliana (Mouse-ear cress).